Here is a 98-residue protein sequence, read N- to C-terminus: NADH-ubiquinone oxidoreductase chain 4L (98 aa).

3 consecutive transmembrane segments (helical) span residues 1-21 (MALT…GLLM), 29-49 (SLLC…LTIL), and 61-81 (IILL…LVMV).

The protein belongs to the complex I subunit 4L family. As to quaternary structure, core subunit of respiratory chain NADH dehydrogenase (Complex I) which is composed of 45 different subunits.

Its subcellular location is the mitochondrion inner membrane. The enzyme catalyses a ubiquinone + NADH + 5 H(+)(in) = a ubiquinol + NAD(+) + 4 H(+)(out). Functionally, core subunit of the mitochondrial membrane respiratory chain NADH dehydrogenase (Complex I) which catalyzes electron transfer from NADH through the respiratory chain, using ubiquinone as an electron acceptor. Part of the enzyme membrane arm which is embedded in the lipid bilayer and involved in proton translocation. The sequence is that of NADH-ubiquinone oxidoreductase chain 4L (MT-ND4L) from Pteropus dasymallus (Ryukyu flying fox).